The following is a 200-amino-acid chain: LexA repressor (200 aa).

A DNA-binding region (H-T-H motif) is located at residues Arg-28 to Lys-48. Catalysis depends on for autocatalytic cleavage activity residues Ser-121 and Lys-158.

This sequence belongs to the peptidase S24 family. In terms of assembly, homodimer.

The enzyme catalyses Hydrolysis of Ala-|-Gly bond in repressor LexA.. Its function is as follows. Represses a number of genes involved in the response to DNA damage (SOS response), including recA and lexA. In the presence of single-stranded DNA, RecA interacts with LexA causing an autocatalytic cleavage which disrupts the DNA-binding part of LexA, leading to derepression of the SOS regulon and eventually DNA repair. This Hahella chejuensis (strain KCTC 2396) protein is LexA repressor.